A 105-amino-acid polypeptide reads, in one-letter code: Nucleoid-associated protein RPE_4812 (105 aa).

The protein belongs to the YbaB/EbfC family. As to quaternary structure, homodimer.

It is found in the cytoplasm. The protein localises to the nucleoid. Its function is as follows. Binds to DNA and alters its conformation. May be involved in regulation of gene expression, nucleoid organization and DNA protection. The sequence is that of Nucleoid-associated protein RPE_4812 from Rhodopseudomonas palustris (strain BisA53).